We begin with the raw amino-acid sequence, 799 residues long: Armadillo repeat-containing protein wrm-1 (799 aa).

Over residues 1–10 the composition is skewed to basic and acidic residues; the sequence is MEERGPDIEK. The segment at 1–60 is disordered; sequence MEERGPDIEKYGSQPCTPLSFDPMLPSTSRVATPVRPSSTLSARQAPASPFRAQPQNMEP. The span at 26–43 shows a compositional bias: polar residues; it reads PSTSRVATPVRPSSTLSA. The stretch at 454 to 496 is one ARM repeat; that stretch reads ESIRRVIQVVGSDDATIAERATGVLRNIGQPNKQNKVIMVRNG.

Interacts (independently of ARM repeat) with nhr-25. Component of the beta-catenin-lit-1 complex (also called the lit-1/wrm-1 complex or the wrm-1/lit-1 kinase complex) at least composed of lit-1 and wrm-1. Interacts (via N-terminus) with lit-1; the interaction is direct and activates lit-1 kinase activity which leads to the phosphorylation of pop-1. This promotes pop-1 interaction with par-5 and translocation of pop-1 from the nucleus to the cytoplasm.

The protein resides in the cytoplasm. It localises to the cell cortex. Its subcellular location is the nucleus. In terms of biological role, antagonistic role in the Wnt signaling pathway that operates in embryogenesis. When located at the cortex it has been shown to inhibit Wnt signaling during asymmetric cell division but when relocated to the nucleus it shows positive regulation. Has a role in blastomere signaling during endoderm specification. Component of the beta-catenin-lit-1 complex which promotes phosphorylation, down-regulation and subcellular relocation of pop-1. Within the complex, activates lit-1-dependent kinase activity. Can substitute for bar-1 indicating functional redundancy. Appears to have a role in centrosome positioning. Involved in the development of distal tip cells (DTC) by regulating the asymmetric distribution of cye-1 and cki-1 between the daughters of Z1.a and Z4.p cells. This is Armadillo repeat-containing protein wrm-1 from Caenorhabditis briggsae.